The chain runs to 326 residues: Transposase InsH for insertion sequence element IS5H (326 aa).

This sequence belongs to the transposase 11 family.

In terms of biological role, involved in the transposition of the insertion sequence IS5. This is Transposase InsH for insertion sequence element IS5H (insH6) from Escherichia coli (strain K12).